The following is a 207-amino-acid chain: LexA repressor (207 aa).

A DNA-binding region (H-T-H motif) is located at residues 28 to 48 (VREIGEAVGLASSSTVHGHLS). Catalysis depends on for autocatalytic cleavage activity residues Ser-130 and Lys-168.

The protein belongs to the peptidase S24 family. In terms of assembly, homodimer.

It catalyses the reaction Hydrolysis of Ala-|-Gly bond in repressor LexA.. Its function is as follows. Represses a number of genes involved in the response to DNA damage (SOS response), including recA and lexA. In the presence of single-stranded DNA, RecA interacts with LexA causing an autocatalytic cleavage which disrupts the DNA-binding part of LexA, leading to derepression of the SOS regulon and eventually DNA repair. The protein is LexA repressor of Staphylococcus aureus (strain MSSA476).